A 294-amino-acid polypeptide reads, in one-letter code: Peroxidase-like protein 3 (294 aa).

Asparagine 129 carries N-linked (GlcNAc...) asparagine glycosylation.

The protein belongs to the peroxidase family. Component of the acid-insoluble and acid-soluble organic matrix of calcified layers of the shell (at protein level).

The protein localises to the secreted. In Lottia gigantea (Giant owl limpet), this protein is Peroxidase-like protein 3.